A 328-amino-acid chain; its full sequence is Phosphate acyltransferase (328 aa).

The protein belongs to the PlsX family. As to quaternary structure, homodimer. Probably interacts with PlsY.

Its subcellular location is the cytoplasm. The enzyme catalyses a fatty acyl-[ACP] + phosphate = an acyl phosphate + holo-[ACP]. It functions in the pathway lipid metabolism; phospholipid metabolism. Catalyzes the reversible formation of acyl-phosphate (acyl-PO(4)) from acyl-[acyl-carrier-protein] (acyl-ACP). This enzyme utilizes acyl-ACP as fatty acyl donor, but not acyl-CoA. The polypeptide is Phosphate acyltransferase (Campylobacter jejuni (strain RM1221)).